The sequence spans 132 residues: Glycine cleavage system H protein (132 aa).

Positions arginine 24–glutamate 106 constitute a Lipoyl-binding domain. Lysine 65 is subject to N6-lipoyllysine.

It belongs to the GcvH family. In terms of assembly, the glycine cleavage system is composed of four proteins: P, T, L and H. (R)-lipoate serves as cofactor.

The glycine cleavage system catalyzes the degradation of glycine. The H protein shuttles the methylamine group of glycine from the P protein to the T protein. This chain is Glycine cleavage system H protein, found in Nocardia farcinica (strain IFM 10152).